The primary structure comprises 718 residues: Fatty acid oxidation complex subunit alpha (718 aa).

The segment at 1–188 (MIYQGESIRV…KVGAVDAVVE (188 aa)) is enoyl-CoA hydratase/isomerase. A substrate-binding site is contributed by Asp295. The 3-hydroxyacyl-CoA dehydrogenase stretch occupies residues 310–718 (TKEIKTAGVL…KSYFDTTSAK (409 aa)). Residues Met324, Asp343, 400–402 (VVE), Lys407, and Ser429 each bind NAD(+). His450 functions as the For 3-hydroxyacyl-CoA dehydrogenase activity in the catalytic mechanism. Residue Asn453 coordinates NAD(+). Substrate-binding residues include Asn500 and Tyr658.

It in the N-terminal section; belongs to the enoyl-CoA hydratase/isomerase family. This sequence in the C-terminal section; belongs to the 3-hydroxyacyl-CoA dehydrogenase family. As to quaternary structure, heterotetramer of two alpha chains (FadB) and two beta chains (FadA).

The catalysed reaction is a (3S)-3-hydroxyacyl-CoA + NAD(+) = a 3-oxoacyl-CoA + NADH + H(+). It catalyses the reaction a (3S)-3-hydroxyacyl-CoA = a (2E)-enoyl-CoA + H2O. The enzyme catalyses a 4-saturated-(3S)-3-hydroxyacyl-CoA = a (3E)-enoyl-CoA + H2O. It carries out the reaction (3S)-3-hydroxybutanoyl-CoA = (3R)-3-hydroxybutanoyl-CoA. The catalysed reaction is a (3Z)-enoyl-CoA = a 4-saturated (2E)-enoyl-CoA. It catalyses the reaction a (3E)-enoyl-CoA = a 4-saturated (2E)-enoyl-CoA. The protein operates within lipid metabolism; fatty acid beta-oxidation. In terms of biological role, involved in the aerobic and anaerobic degradation of long-chain fatty acids via beta-oxidation cycle. Catalyzes the formation of 3-oxoacyl-CoA from enoyl-CoA via L-3-hydroxyacyl-CoA. It can also use D-3-hydroxyacyl-CoA and cis-3-enoyl-CoA as substrate. The chain is Fatty acid oxidation complex subunit alpha from Idiomarina loihiensis (strain ATCC BAA-735 / DSM 15497 / L2-TR).